A 67-amino-acid chain; its full sequence is Large ribosomal subunit protein bL35 (67 aa).

It belongs to the bacterial ribosomal protein bL35 family.

In Rhizobium johnstonii (strain DSM 114642 / LMG 32736 / 3841) (Rhizobium leguminosarum bv. viciae), this protein is Large ribosomal subunit protein bL35.